The following is a 39-amino-acid chain: Potassium channel toxin alpha-KTx 31.1 (39 aa).

Intrachain disulfides connect Cys-7/Cys-30, Cys-13/Cys-35, and Cys-17/Cys-37.

This sequence belongs to the short scorpion toxin superfamily. Potassium channel inhibitor family. Alpha-KTx 31 subfamily. In terms of tissue distribution, expressed by the venom gland.

The protein localises to the secreted. Voltage-gated potassium channel inhibitor. 1 uM of the native toxin inhibits rat Kv1.2/KCNA2 (100% inhibition), and drosophila Shaker IR/Sh (100%), human Kv1.3/KCNA3 (83%), rat Kv1.1/KCNA1 (32%) and rat Kv1.6/KCNA6 (21%). The sequence is that of Potassium channel toxin alpha-KTx 31.1 from Buthus occitanus tunetanus (Common European scorpion).